The primary structure comprises 55 residues: uncharacterized protein (55 aa).

This is an uncharacterized protein from Tibrogargan virus (strain CS132) (TIBV).